We begin with the raw amino-acid sequence, 156 residues long: Deoxyuridine 5'-triphosphate nucleotidohydrolase (156 aa).

Substrate contacts are provided by residues 76–78 (RSG), N89, 93–95 (TVD), and K103.

This sequence belongs to the dUTPase family. Mg(2+) serves as cofactor.

It catalyses the reaction dUTP + H2O = dUMP + diphosphate + H(+). Its pathway is pyrimidine metabolism; dUMP biosynthesis; dUMP from dCTP (dUTP route): step 2/2. This enzyme is involved in nucleotide metabolism: it produces dUMP, the immediate precursor of thymidine nucleotides and it decreases the intracellular concentration of dUTP so that uracil cannot be incorporated into DNA. This is Deoxyuridine 5'-triphosphate nucleotidohydrolase from Rhizobium leguminosarum bv. trifolii (strain WSM2304).